A 318-amino-acid polypeptide reads, in one-letter code: Acetaldehyde dehydrogenase 2 (318 aa).

9–12 (SGNI) contributes to the NAD(+) binding site. Cys-129 functions as the Acyl-thioester intermediate in the catalytic mechanism. Residues 160-168 (SAGPGTRAN) and Asn-288 each bind NAD(+).

This sequence belongs to the acetaldehyde dehydrogenase family.

The catalysed reaction is acetaldehyde + NAD(+) + CoA = acetyl-CoA + NADH + H(+). In Mycolicibacterium vanbaalenii (strain DSM 7251 / JCM 13017 / BCRC 16820 / KCTC 9966 / NRRL B-24157 / PYR-1) (Mycobacterium vanbaalenii), this protein is Acetaldehyde dehydrogenase 2.